A 258-amino-acid chain; its full sequence is Methylthioribulose-1-phosphate dehydratase (258 aa).

Positions 1-20 (MTPPSNGQAAETNDHLVQSD) are enriched in polar residues. A disordered region spans residues 1–21 (MTPPSNGQAAETNDHLVQSDN). Substrate is bound at residue Cys-105. Residues His-123 and His-125 each coordinate Zn(2+). The active-site Proton donor/acceptor is the Glu-153. His-210 is a binding site for Zn(2+).

This sequence belongs to the aldolase class II family. MtnB subfamily. Zn(2+) is required as a cofactor.

It is found in the cytoplasm. It carries out the reaction 5-(methylsulfanyl)-D-ribulose 1-phosphate = 5-methylsulfanyl-2,3-dioxopentyl phosphate + H2O. It participates in amino-acid biosynthesis; L-methionine biosynthesis via salvage pathway; L-methionine from S-methyl-5-thio-alpha-D-ribose 1-phosphate: step 2/6. Its function is as follows. Catalyzes the dehydration of methylthioribulose-1-phosphate (MTRu-1-P) into 2,3-diketo-5-methylthiopentyl-1-phosphate (DK-MTP-1-P). The protein is Methylthioribulose-1-phosphate dehydratase of Chaetomium globosum (strain ATCC 6205 / CBS 148.51 / DSM 1962 / NBRC 6347 / NRRL 1970) (Soil fungus).